Reading from the N-terminus, the 172-residue chain is Allergen Bos d 2 (172 aa).

The signal sequence occupies residues 1–16 (MKAVFLTLLFGLVCTA). Position 17 is a pyrrolidone carboxylic acid (glutamine 17). Cystine bridges form between cysteine 60–cysteine 64 and cysteine 79–cysteine 170.

It belongs to the calycin superfamily. Lipocalin family. As to expression, found exclusively in skin. Produced in sweat glands and transported to the skin surface.

Its subcellular location is the secreted. Functionally, probable pheromone carrier. The chain is Allergen Bos d 2 from Bos taurus (Bovine).